A 404-amino-acid polypeptide reads, in one-letter code: Argininosuccinate synthase (404 aa).

ATP is bound by residues 10–18 (AYSGGLDTS) and alanine 37. The L-citrulline site is built by tyrosine 90 and serine 95. An ATP-binding site is contributed by glycine 120. Threonine 122, asparagine 126, and aspartate 127 together coordinate L-aspartate. An L-citrulline-binding site is contributed by asparagine 126. L-citrulline is bound by residues arginine 130, serine 181, serine 190, glutamate 266, and tyrosine 278.

The protein belongs to the argininosuccinate synthase family. Type 1 subfamily. Homotetramer.

The protein resides in the cytoplasm. It carries out the reaction L-citrulline + L-aspartate + ATP = 2-(N(omega)-L-arginino)succinate + AMP + diphosphate + H(+). It functions in the pathway amino-acid biosynthesis; L-arginine biosynthesis; L-arginine from L-ornithine and carbamoyl phosphate: step 2/3. The polypeptide is Argininosuccinate synthase (Erythrobacter litoralis (strain HTCC2594)).